Reading from the N-terminus, the 98-residue chain is NADH-ubiquinone oxidoreductase chain 4L (98 aa).

The next 3 helical transmembrane spans lie at 1-21 (MSLINMNLMLAFTMSLTGLLM), 29-49 (ALLCLEGMMLSLFTLTTLTIL), and 61-81 (IILLVFAACEAAIGLALLVMI).

The protein belongs to the complex I subunit 4L family. As to quaternary structure, core subunit of respiratory chain NADH dehydrogenase (Complex I) which is composed of 45 different subunits.

The protein resides in the mitochondrion inner membrane. It catalyses the reaction a ubiquinone + NADH + 5 H(+)(in) = a ubiquinol + NAD(+) + 4 H(+)(out). Core subunit of the mitochondrial membrane respiratory chain NADH dehydrogenase (Complex I) which catalyzes electron transfer from NADH through the respiratory chain, using ubiquinone as an electron acceptor. Part of the enzyme membrane arm which is embedded in the lipid bilayer and involved in proton translocation. The polypeptide is NADH-ubiquinone oxidoreductase chain 4L (MT-ND4L) (Platanista minor (Indus river dolphin)).